The following is a 245-amino-acid chain: Lactate utilization protein A (245 aa).

Belongs to the LutA/YkgE family.

Is involved in L-lactate degradation and allows cells to grow with lactate as the sole carbon source. The sequence is that of Lactate utilization protein A from Macrococcus caseolyticus (strain JCSC5402) (Macrococcoides caseolyticum).